The sequence spans 208 residues: Uracil phosphoribosyltransferase (208 aa).

5-phospho-alpha-D-ribose 1-diphosphate is bound by residues R78, R103, and 130 to 138; that span reads DPMLATGGS. Residues I193 and 198-200 contribute to the uracil site; that span reads GDA. Residue D199 coordinates 5-phospho-alpha-D-ribose 1-diphosphate.

It belongs to the UPRTase family. It depends on Mg(2+) as a cofactor.

It catalyses the reaction UMP + diphosphate = 5-phospho-alpha-D-ribose 1-diphosphate + uracil. Its pathway is pyrimidine metabolism; UMP biosynthesis via salvage pathway; UMP from uracil: step 1/1. With respect to regulation, allosterically activated by GTP. Its function is as follows. Catalyzes the conversion of uracil and 5-phospho-alpha-D-ribose 1-diphosphate (PRPP) to UMP and diphosphate. The protein is Uracil phosphoribosyltransferase of Yersinia pestis.